Reading from the N-terminus, the 477-residue chain is Probable cytosolic Fe-S cluster assembly factor GG21400 (477 aa).

[4Fe-4S] cluster-binding residues include Cys-23, Cys-68, Cys-71, Cys-74, Cys-187, Cys-243, Cys-395, and Cys-399.

The protein belongs to the NARF family.

In terms of biological role, component of the cytosolic iron-sulfur (Fe/S) protein assembly machinery. Required for maturation of extramitochondrial Fe/S proteins. This Drosophila erecta (Fruit fly) protein is Probable cytosolic Fe-S cluster assembly factor GG21400.